The primary structure comprises 310 residues: tRNA pseudouridine synthase B (310 aa).

Catalysis depends on D49, which acts as the Nucleophile.

Belongs to the pseudouridine synthase TruB family. Type 1 subfamily.

The enzyme catalyses uridine(55) in tRNA = pseudouridine(55) in tRNA. Functionally, responsible for synthesis of pseudouridine from uracil-55 in the psi GC loop of transfer RNAs. This is tRNA pseudouridine synthase B from Idiomarina loihiensis (strain ATCC BAA-735 / DSM 15497 / L2-TR).